A 164-amino-acid chain; its full sequence is Protein-export protein SecB (164 aa).

This sequence belongs to the SecB family. Homotetramer, a dimer of dimers. One homotetramer interacts with 1 SecA dimer.

It localises to the cytoplasm. In terms of biological role, one of the proteins required for the normal export of preproteins out of the cell cytoplasm. It is a molecular chaperone that binds to a subset of precursor proteins, maintaining them in a translocation-competent state. It also specifically binds to its receptor SecA. This is Protein-export protein SecB from Ruegeria sp. (strain TM1040) (Silicibacter sp.).